Here is a 145-residue protein sequence, read N- to C-terminus: Large ribosomal subunit protein bL9 (145 aa).

Belongs to the bacterial ribosomal protein bL9 family.

In terms of biological role, binds to the 23S rRNA. This is Large ribosomal subunit protein bL9 from Mesomycoplasma hyopneumoniae (strain 7448) (Mycoplasma hyopneumoniae).